Consider the following 631-residue polypeptide: 1-deoxy-D-xylulose-5-phosphate synthase (631 aa).

Thiamine diphosphate-binding positions include H73, 113–115 (SHA), N174, Y285, and E367. N174 is a Mg(2+) binding site.

It belongs to the transketolase family. DXPS subfamily. In terms of assembly, homodimer. Mg(2+) serves as cofactor. Thiamine diphosphate is required as a cofactor.

The catalysed reaction is D-glyceraldehyde 3-phosphate + pyruvate + H(+) = 1-deoxy-D-xylulose 5-phosphate + CO2. Its pathway is metabolic intermediate biosynthesis; 1-deoxy-D-xylulose 5-phosphate biosynthesis; 1-deoxy-D-xylulose 5-phosphate from D-glyceraldehyde 3-phosphate and pyruvate: step 1/1. In terms of biological role, catalyzes the acyloin condensation reaction between C atoms 2 and 3 of pyruvate and glyceraldehyde 3-phosphate to yield 1-deoxy-D-xylulose-5-phosphate (DXP). The chain is 1-deoxy-D-xylulose-5-phosphate synthase from Streptomyces sp. (strain CL190).